A 63-amino-acid chain; its full sequence is Toxin S6C6 (63 aa).

Intrachain disulfides connect cysteine 3–cysteine 24, cysteine 6–cysteine 11, cysteine 17–cysteine 39, cysteine 43–cysteine 55, and cysteine 56–cysteine 61.

Belongs to the three-finger toxin family. Ancestral subfamily. Orphan group XIX sub-subfamily. Expressed by the venom gland.

It is found in the secreted. Functionally, may enhance presynaptic acetylcholine release. The protein is Toxin S6C6 of Dendroaspis jamesoni kaimosae (Eastern Jameson's mamba).